Here is a 153-residue protein sequence, read N- to C-terminus: Arginine repressor (153 aa).

Belongs to the ArgR family.

It is found in the cytoplasm. It functions in the pathway amino-acid biosynthesis; L-arginine biosynthesis [regulation]. Its function is as follows. Regulates arginine biosynthesis genes. The polypeptide is Arginine repressor (Haemophilus ducreyi (strain 35000HP / ATCC 700724)).